A 278-amino-acid chain; its full sequence is Elongation factor Ts (278 aa).

Positions 81 to 84 (TDFV) are involved in Mg(2+) ion dislocation from EF-Tu.

The protein belongs to the EF-Ts family.

It is found in the cytoplasm. Associates with the EF-Tu.GDP complex and induces the exchange of GDP to GTP. It remains bound to the aminoacyl-tRNA.EF-Tu.GTP complex up to the GTP hydrolysis stage on the ribosome. The protein is Elongation factor Ts of Thermobifida fusca (strain YX).